The following is a 233-amino-acid chain: MRRFKFQYKETIVTILTENEEFYKTAVKAILEARSEIEDYILHNPDFFTSYEPIECSGGEIINRMCNAAKIAGVGPMAAVAGTIAAYAVEKMIDAGAKLAVVDNGGDIVIHSDRELLVGIYPSKLAFKVPPVDYLAICTSSGKIGHSVSFGKADAATVVARDASVADALATALGNLIGDFGKKELEKTVSEFYGKYSDFVEGILVVKDELVALAGNLPSLAFAESKEDLITKG.

This sequence belongs to the UPF0280 family.

The sequence is that of UPF0280 protein AF_0649 from Archaeoglobus fulgidus (strain ATCC 49558 / DSM 4304 / JCM 9628 / NBRC 100126 / VC-16).